The sequence spans 310 residues: Methionyl-tRNA formyltransferase (310 aa).

Residue 114–117 (SLLP) participates in (6S)-5,6,7,8-tetrahydrofolate binding.

The protein belongs to the Fmt family.

The enzyme catalyses L-methionyl-tRNA(fMet) + (6R)-10-formyltetrahydrofolate = N-formyl-L-methionyl-tRNA(fMet) + (6S)-5,6,7,8-tetrahydrofolate + H(+). Functionally, attaches a formyl group to the free amino group of methionyl-tRNA(fMet). The formyl group appears to play a dual role in the initiator identity of N-formylmethionyl-tRNA by promoting its recognition by IF2 and preventing the misappropriation of this tRNA by the elongation apparatus. This is Methionyl-tRNA formyltransferase from Granulibacter bethesdensis (strain ATCC BAA-1260 / CGDNIH1).